Here is a 159-residue protein sequence, read N- to C-terminus: Protein SPA, chloroplastic (159 aa).

The N-terminal 47 residues, 1-47, are a transit peptide targeting the chloroplast; that stretch reads MLTAPSLSRFKSPFISSPLKLPTLSSSFFTQKFHQTCRRRNSYPCIK. A helical membrane pass occupies residues 56–76; the sequence is VIAITVGVLSVAIGVGIPVFY. Residues 85–145 form a CR-type-like region; it reads KRENTQPCFP…TCTTCQGSGI (61 aa). CXXCXGXG motif repeat units follow at residues 92-99, 103-110, 126-133, and 137-144; these read CFPCTGTG, CRFCMGTG, CINCDGAG, and CTTCQGSG.

As to expression, expressed in source leaves. Lower levels of expression in fruits and stems.

It localises to the plastid. Its subcellular location is the chloroplast thylakoid membrane. Functionally, participates in determining harvest index (HI) by affecting source-sink carbon distribution. Up-regulates the conversion of fixed carbon to exportable sugars. This chain is Protein SPA, chloroplastic, found in Solanum lycopersicum (Tomato).